Consider the following 266-residue polypeptide: 22 kDa alpha-zein 8 (266 aa).

The signal sequence occupies residues 1–21 (MATKILALLALLALFVSATNA).

This sequence belongs to the zein family.

Its function is as follows. Zeins are major seed storage proteins. This Zea mays (Maize) protein is 22 kDa alpha-zein 8.